A 307-amino-acid polypeptide reads, in one-letter code: Oxygen-dependent coproporphyrinogen-III oxidase (307 aa).

Position 99 (Ser99) interacts with substrate. A divalent metal cation contacts are provided by His103 and His113. His113 (proton donor) is an active-site residue. Position 115 to 117 (115 to 117 (NVR)) interacts with substrate. Residues His152 and His182 each coordinate a divalent metal cation. Positions 247 to 282 (YVEFNLVFDRGTLFGLQSGGRTESILLSMPPTAGWR) are important for dimerization. 265 to 267 (GGR) contacts substrate.

This sequence belongs to the aerobic coproporphyrinogen-III oxidase family. Homodimer. Requires a divalent metal cation as cofactor.

Its subcellular location is the cytoplasm. The catalysed reaction is coproporphyrinogen III + O2 + 2 H(+) = protoporphyrinogen IX + 2 CO2 + 2 H2O. Its pathway is porphyrin-containing compound metabolism; protoporphyrin-IX biosynthesis; protoporphyrinogen-IX from coproporphyrinogen-III (O2 route): step 1/1. Functionally, involved in the heme biosynthesis. Catalyzes the aerobic oxidative decarboxylation of propionate groups of rings A and B of coproporphyrinogen-III to yield the vinyl groups in protoporphyrinogen-IX. This chain is Oxygen-dependent coproporphyrinogen-III oxidase, found in Burkholderia pseudomallei (strain 1106a).